Reading from the N-terminus, the 244-residue chain is NAD reductase coq12 (244 aa).

The interval 131–158 (NPLMNSEKNSTSVEDLPGSNRTQQTSSH) is disordered. A compositionally biased stretch (polar residues) spans 132 to 158 (PLMNSEKNSTSVEDLPGSNRTQQTSSH).

It is found in the mitochondrion. The catalysed reaction is a reduced flavin + NAD(+) = an oxidized flavin + NADH + 2 H(+). In terms of biological role, NADH-dependent flavin reductase that acts in the coenzyme Q biosynthetic pathway. Required for synthesis of the p-hydroxybenzoic acid (PHB) precursor to form a quinone backbone. In Schizosaccharomyces pombe (strain 972 / ATCC 24843) (Fission yeast), this protein is NAD reductase coq12.